A 377-amino-acid chain; its full sequence is Nitric oxide reductase FlRd-NAD(+) reductase (377 aa).

The protein belongs to the FAD-dependent oxidoreductase family. The cofactor is FAD.

The protein resides in the cytoplasm. It catalyses the reaction 2 reduced [nitric oxide reductase rubredoxin domain] + NAD(+) + H(+) = 2 oxidized [nitric oxide reductase rubredoxin domain] + NADH. It participates in nitrogen metabolism; nitric oxide reduction. One of at least two accessory proteins for anaerobic nitric oxide (NO) reductase. Reduces the rubredoxin moiety of NO reductase. This chain is Nitric oxide reductase FlRd-NAD(+) reductase, found in Shigella flexneri serotype 5b (strain 8401).